We begin with the raw amino-acid sequence, 623 residues long: uncharacterized protein (623 aa).

5 consecutive transmembrane segments (helical) span residues 242 to 262 (IALA…ITWL), 288 to 308 (IVSP…LDIF), 318 to 338 (VSMW…IALF), 361 to 381 (VINL…LLGV), and 387 to 407 (FNVS…ALAV).

It belongs to the MscS (TC 1.A.23) family.

The protein localises to the cell membrane. This is an uncharacterized protein from Helicobacter pylori (strain J99 / ATCC 700824) (Campylobacter pylori J99).